Reading from the N-terminus, the 204-residue chain is Probable nicotinate-nucleotide adenylyltransferase (204 aa).

The protein belongs to the NadD family.

The enzyme catalyses nicotinate beta-D-ribonucleotide + ATP + H(+) = deamido-NAD(+) + diphosphate. It functions in the pathway cofactor biosynthesis; NAD(+) biosynthesis; deamido-NAD(+) from nicotinate D-ribonucleotide: step 1/1. Its function is as follows. Catalyzes the reversible adenylation of nicotinate mononucleotide (NaMN) to nicotinic acid adenine dinucleotide (NaAD). The sequence is that of Probable nicotinate-nucleotide adenylyltransferase from Dehalococcoides mccartyi (strain ATCC BAA-2100 / JCM 16839 / KCTC 5957 / BAV1).